The sequence spans 200 residues: Serine/arginine-rich splicing factor RSZ23 (200 aa).

The RRM domain maps to alanine 2–lysine 71. The CCHC-type zinc finger occupies methionine 86–leucine 103. The segment at isoleucine 105–alanine 200 is disordered. Positions glycine 113 to arginine 139 are enriched in basic residues.

It belongs to the splicing factor SR family. In terms of processing, extensively phosphorylated on serine residues in the RS domain. In terms of tissue distribution, expressed in roots, leaves and immature seeds.

It localises to the nucleus. Involved in pre-mRNA splicing. In protoplast assay, enhances splicing efficiency of WAXY intron 1 and alters the selection of the 5'-splice sites by stimulating site 1 (proximal site). In Oryza sativa subsp. japonica (Rice), this protein is Serine/arginine-rich splicing factor RSZ23 (RSZ23).